The primary structure comprises 315 residues: Apolipoprotein F (315 aa).

A signal peptide spans 1–24 (MHSLRLILMSIQLLCYLLLCPVDA). Residues 25 to 154 (TSHGEATSVS…EQPGPKRAKR (130 aa)) constitute a propeptide that is removed on maturation.

Belongs to the apolipoprotein F family. Liver.

The protein resides in the secreted. In terms of biological role, minor apolipoprotein that associates with LDL. Inhibits cholesteryl ester transfer protein (CETP) activity and appears to be an important regulator of cholesterol transport. Also associates to a lesser degree with VLDL, Apo-AI and Apo-AII. The chain is Apolipoprotein F (Apof) from Mus musculus (Mouse).